The sequence spans 370 residues: Pyruvate dehydrogenase E1 component subunit alpha (370 aa).

Heterodimer of an alpha and a beta chain. It depends on thiamine diphosphate as a cofactor.

The catalysed reaction is N(6)-[(R)-lipoyl]-L-lysyl-[protein] + pyruvate + H(+) = N(6)-[(R)-S(8)-acetyldihydrolipoyl]-L-lysyl-[protein] + CO2. In terms of biological role, the pyruvate dehydrogenase complex catalyzes the overall conversion of pyruvate to acetyl-CoA and CO(2). It contains multiple copies of three enzymatic components: pyruvate dehydrogenase (E1), dihydrolipoamide acetyltransferase (E2) and lipoamide dehydrogenase (E3). This is Pyruvate dehydrogenase E1 component subunit alpha (pdhA) from Staphylococcus aureus (strain COL).